Here is a 412-residue protein sequence, read N- to C-terminus: MSKIKESSSGILGASNNTNKESSQKSARSIALPMTYALIGVSCLNVWNSALGLNIKITYNIFQMAGLLTSSVLALFVNYPRVLLPTSLGVLTLLCAGFQIAHQTFSDSAFDTYCLAAFITIGLMAGIAQTIAFAIGTTKESNMSGYISAGIGMSGVLIFCINLILDYIVSDEKIYEINKSKLLCLFSISEIFLIITIVCCVLYIDLFPKNDNNKDSTDIEKAEEKEGRLPLIEIIKDGYKAILSIFLVNWLSLQLFPGIGHKKWQEKHGMTDNNVTIIVGMFQVFDFISRYPPNFTHIKIFKYFTFSLNTLLIGNFLRLLFIPWFVLNAVISSSFFTNIVQQCVCIAALAFTNGWFNTVPFIVFVKELKKVKHQKDIETISRIMVVSLFFGLFFGMLTTCLYDYFPIGILNN.

A disordered region spans residues 1-21; the sequence is MSKIKESSSGILGASNNTNKE. At 1–29 the chain is on the cytoplasmic side; sequence MSKIKESSSGILGASNNTNKESSQKSARS. Polar residues predominate over residues 7–21; it reads SSSGILGASNNTNKE. The chain crosses the membrane as a helical span at residues 30 to 50; sequence IALPMTYALIGVSCLNVWNSA. Residues 51-56 lie on the Extracellular side of the membrane; the sequence is LGLNIK. Residues 57-77 traverse the membrane as a helical segment; sequence ITYNIFQMAGLLTSSVLALFV. The Cytoplasmic segment spans residues 78–81; it reads NYPR. A helical transmembrane segment spans residues 82–102; sequence VLLPTSLGVLTLLCAGFQIAH. The Extracellular portion of the chain corresponds to 103-114; it reads QTFSDSAFDTYC. Residues 115 to 135 form a helical membrane-spanning segment; that stretch reads LAAFITIGLMAGIAQTIAFAI. At 136-144 the chain is on the cytoplasmic side; the sequence is GTTKESNMS. A helical transmembrane segment spans residues 145 to 165; sequence GYISAGIGMSGVLIFCINLIL. At 166-181 the chain is on the extracellular side; the sequence is DYIVSDEKIYEINKSK. The helical transmembrane segment at 182–202 threads the bilayer; that stretch reads LLCLFSISEIFLIITIVCCVL. The Cytoplasmic portion of the chain corresponds to 203–240; the sequence is YIDLFPKNDNNKDSTDIEKAEEKEGRLPLIEIIKDGYK. The chain crosses the membrane as a helical span at residues 241-261; it reads AILSIFLVNWLSLQLFPGIGH. The Extracellular portion of the chain corresponds to 262-271; sequence KKWQEKHGMT. Residues 272–294 traverse the membrane as a helical segment; the sequence is DNNVTIIVGMFQVFDFISRYPPN. Topologically, residues 295-310 are cytoplasmic; the sequence is FTHIKIFKYFTFSLNT. The chain crosses the membrane as a helical span at residues 311-331; that stretch reads LLIGNFLRLLFIPWFVLNAVI. Residues 332–343 are Extracellular-facing; the sequence is SSSFFTNIVQQC. The helical transmembrane segment at 344-364 threads the bilayer; that stretch reads VCIAALAFTNGWFNTVPFIVF. Residues 365-382 lie on the Cytoplasmic side of the membrane; sequence VKELKKVKHQKDIETISR. The helical transmembrane segment at 383–403 threads the bilayer; that stretch reads IMVVSLFFGLFFGMLTTCLYD. Topologically, residues 404–412 are extracellular; that stretch reads YFPIGILNN.

Belongs to the SLC29A/ENT transporter (TC 2.A.57) family.

The protein localises to the cell membrane. The enzyme catalyses inosine(in) = inosine(out). It carries out the reaction adenosine(in) = adenosine(out). The catalysed reaction is hypoxanthine(out) = hypoxanthine(in). It catalyses the reaction guanosine(in) = guanosine(out). The enzyme catalyses guanine(out) = guanine(in). It carries out the reaction thymidine(in) = thymidine(out). The catalysed reaction is uridine(out) = uridine(in). It catalyses the reaction uracil(in) = uracil(out). The enzyme catalyses thymine(out) = thymine(in). It carries out the reaction adenine(out) = adenine(in). The catalysed reaction is cytosine(out) = cytosine(in). It catalyses the reaction xanthine(out) = xanthine(in). Its function is as follows. Nucleoside and nucleobase transporter with a broad substrate specificity. In Plasmodium berghei (strain Anka), this protein is Nucleoside transporter 1.